Reading from the N-terminus, the 147-residue chain is UPF0178 protein Nther_1836 (147 aa).

The protein belongs to the UPF0178 family.

The protein is UPF0178 protein Nther_1836 of Natranaerobius thermophilus (strain ATCC BAA-1301 / DSM 18059 / JW/NM-WN-LF).